The primary structure comprises 122 residues: Large ribosomal subunit protein uL22c (122 aa).

This sequence belongs to the universal ribosomal protein uL22 family. As to quaternary structure, part of the 50S ribosomal subunit.

Its subcellular location is the plastid. It localises to the chloroplast. Functionally, this protein binds specifically to 23S rRNA. Its function is as follows. The globular domain of the protein is located near the polypeptide exit tunnel on the outside of the subunit, while an extended beta-hairpin is found that lines the wall of the exit tunnel in the center of the 70S ribosome. The chain is Large ribosomal subunit protein uL22c (rpl22) from Adiantum capillus-veneris (Maidenhair fern).